Here is a 1503-residue protein sequence, read N- to C-terminus: Chromosome partition protein MukB (1503 aa).

Polar residues predominate over residues 1-19 (MMNTNELFDQTAVNSSQDK). Residues 1–21 (MMNTNELFDQTAVNSSQDKPL) are disordered. 65-72 (GGNGAGKS) serves as a coordination point for ATP. Coiled-coil stretches lie at residues 370 to 495 (MNAL…QRLS), 536 to 616 (DQKM…HRQQ), 662 to 697 (MQEMLRKEREATLERDELARTEAALASQISQLSQAD), 865 to 1173 (EMLM…SAEE), and 1238 to 1293 (DAIE…LQNI). Positions 696 to 813 (ADGAEDIRLN…EVPLFGRAAR (118 aa)) are flexible hinge.

It belongs to the SMC family. MukB subfamily. In terms of assembly, homodimerization via its hinge domain. Binds to DNA via its C-terminal region. Interacts, and probably forms a ternary complex, with MukE and MukF via its C-terminal region. The complex formation is stimulated by calcium or magnesium. Interacts with tubulin-related protein FtsZ.

It localises to the cytoplasm. The protein resides in the nucleoid. In terms of biological role, plays a central role in chromosome condensation, segregation and cell cycle progression. Functions as a homodimer, which is essential for chromosome partition. Involved in negative DNA supercoiling in vivo, and by this means organize and compact chromosomes. May achieve or facilitate chromosome segregation by condensation DNA from both sides of a centrally located replisome during cell division. The sequence is that of Chromosome partition protein MukB from Haemophilus ducreyi (strain 35000HP / ATCC 700724).